The primary structure comprises 569 residues: Glutamate--tRNA ligase (569 aa).

The 'HIGH' region motif lies at 99–109 (PEPNGYPTLGH).

This sequence belongs to the class-I aminoacyl-tRNA synthetase family. Glutamate--tRNA ligase type 2 subfamily.

The protein resides in the cytoplasm. The catalysed reaction is tRNA(Glu) + L-glutamate + ATP = L-glutamyl-tRNA(Glu) + AMP + diphosphate. In terms of biological role, catalyzes the attachment of glutamate to tRNA(Glu) in a two-step reaction: glutamate is first activated by ATP to form Glu-AMP and then transferred to the acceptor end of tRNA(Glu). This chain is Glutamate--tRNA ligase, found in Korarchaeum cryptofilum (strain OPF8).